The chain runs to 305 residues: Glycine--tRNA ligase alpha subunit (305 aa).

Belongs to the class-II aminoacyl-tRNA synthetase family. In terms of assembly, tetramer of two alpha and two beta subunits.

The protein resides in the cytoplasm. It catalyses the reaction tRNA(Gly) + glycine + ATP = glycyl-tRNA(Gly) + AMP + diphosphate. This chain is Glycine--tRNA ligase alpha subunit, found in Streptococcus uberis (strain ATCC BAA-854 / 0140J).